Consider the following 172-residue polypeptide: Myosin regulatory light polypeptide 9 (172 aa).

Residues Met1–Gln16 show a composition bias toward basic residues. The interval Met1–Ser20 is disordered. Ser2 carries the N-acetylserine modification. Thr19 is modified (phosphothreonine; by MLCK, CIT and ROCK2). At Ser20 the chain carries Phosphoserine; by CDC42BP, CIT, MLCK, PAK1, ROCK1, ROCK2, DAPK1, DAPK2 and ZIPK/DAPK3. EF-hand domains lie at Ser29–Asn64, Asp98–Arg133, and Phe134–Asp169. Ca(2+) is bound by residues Asp42, Asn44, Asp46, and Asp53.

Myosin is a hexamer of 2 heavy chains and 4 light chains: interacts with myosin heavy chain MYO19. Interacts with LUZP1; the interaction results in inhibition of phosphorylation of MYL9 by DAPK3. Post-translationally, phosphorylation increases the actin-activated myosin ATPase activity and thereby regulates the contractile activity. It is required to generate the driving force in the migration of the cells but not necessary for localization of myosin-2 at the leading edge. Phosphorylation is required for myotube formation. Phosphorylated by DAPK3; DAPK3-mediated phosphorylation is inhibited by LUZP1.

Its subcellular location is the cytoplasm. It localises to the cytoskeleton. The protein resides in the cell cortex. In terms of biological role, myosin regulatory subunit that plays an important role in regulation of both smooth muscle and nonmuscle cell contractile activity via its phosphorylation. Implicated in cytokinesis, receptor capping, and cell locomotion. In myoblasts, may regulate PIEZO1-dependent cortical actomyosin assembly involved in myotube formation. The protein is Myosin regulatory light polypeptide 9 (MYL9) of Bos taurus (Bovine).